Reading from the N-terminus, the 213-residue chain is Alkylbase DNA glycosidase-like protein mag2 (213 aa).

K53, L54, S61, H91, G94, S96, K97, K99, E102, K137, G138, K140, T143, S163, and T164 together coordinate DNA.

Belongs to the alkylbase DNA glycosidase AlkA family.

Its subcellular location is the nucleus. Functionally, alkylbase DNA glycosidase-like protein that shows no DNA glycosylase activity for alkylated bases. The molecular role of mag2 appears to be abasic (AP) site recognition and protection, while possibly facilitating damage signaling by structurally sculpting the DNA substrate. Stimulates AP site binding to mismatch repair protein mutS. This chain is Alkylbase DNA glycosidase-like protein mag2, found in Schizosaccharomyces pombe (strain 972 / ATCC 24843) (Fission yeast).